The sequence spans 971 residues: MAFSVVLHPAFLLAVLSLRASRSEVLEEPLPLTPEIHKVSFQLKLQEVNLEWTVPALTHEELNMIFQIEISRLNISNTIWVENYSTTVKREEAVRWNWTSDIPLECVKHFIRIRALVDDTKSLPQSSWGNWSSWKEVNAKVSVEPDKSLIFPKDKVLEEGSNVTICLMYGQNVYNVSCKLQDEPIHGEQLDSHVSLLKLNNVVFLSDTGTNINCQATKGPKRIFGTVLFVSKVLEEPKNVSCETRDFKTLDCSWEPGVDTTLTWRKQRFQNYTLCESFSKRCEVSNYRNSYTWQITEGSQEMYNFTLTAENQLRKRSVNINFNLTHRVHPKAPQDVTLKIIGATKANMTWKVHSHGNNYTLLCQVKLQYGEVIHEHNVSVHMSANYLFSDLDPDTKYKAFVRCASANHFWKWSDWTQKEFSTPETAPSQALDVWRQVWSENGRRIVTLFWKPLLKSQANGKIISYNIVVENEAKPTESEHYCVWAPALSTNLSLDLQPYKIRITTNNSMGASPESLMVLSNDSGHEEVKEKTIKGIKDAFNISWEPVSGDTMGYVVDWCAHSQDQRCDLQWKNLGPNTTSTTITSDDFKPGVRYNFRIFERSVEHKARLVEKQRGYTQELAPLVNPKVEIPYSTPNSFVLRWPDYDSDFQAGFIKGYLVYVKSKEMQCNQPWERTLLPDNSVLCKYDINGSETKTLTVENLQPESLYEFFVTPYTSAGPGPNETFTKVTTPDARSHMLLQIILPMTLCVLLSIIVCYWKSQWVKEKCYPDIPNPYKSSILSLIKSKKNPHLIMNVKDCIPDVLEVINKAEGSKTQCVGSGKLHIEDVPTKPPIVPTEKDSSGPVPCIFFENFTYDQSAFDSGSHGLIPGPLKDTAHQLGLLAPPNKFQNVLKNDYMKPLVESPTEETSLIYVSQLASPMCGDKDTLATEPPVPVHGSEYKRQMVVPGSLASPSLKEDNSLTSTVLLGQGEQ.

Residues 1–23 (MAFSVVLHPAFLLAVLSLRASRS) form the signal peptide. Topologically, residues 24 to 737 (EVLEEPLPLT…VTTPDARSHM (714 aa)) are extracellular. N-linked (GlcNAc...) asparagine glycans are attached at residues Asn-74, Asn-97, Asn-130, Asn-162, and Asn-239. Cysteines 242 and 252 form a disulfide. Asn-271, Asn-304, Asn-323, and Asn-377 each carry an N-linked (GlcNAc...) asparagine glycan. Fibronectin type-III domains follow at residues 332 to 425 (APQD…TPET), 427 to 523 (PSQA…SNDS), 524 to 620 (GHEE…TQEL), and 622 to 733 (PLVN…TPDA). Positions 412-416 (WSDWT) match the WSXWS motif motif. Residues Asn-491, Asn-541, Asn-577, Asn-689, and Asn-722 are each glycosylated (N-linked (GlcNAc...) asparagine). The chain crosses the membrane as a helical span at residues 738–758 (LLQIILPMTLCVLLSIIVCYW). Residues 759–971 (KSQWVKEKCY…STVLLGQGEQ (213 aa)) are Cytoplasmic-facing. Residues 767 to 775 (CYPDIPNPY) carry the Box 1 motif motif. The segment at 949–971 (LASPSLKEDNSLTSTVLLGQGEQ) is disordered. The segment covering 959–971 (SLTSTVLLGQGEQ) has biased composition (polar residues).

The protein belongs to the type I cytokine receptor family. Type 2 subfamily. In terms of assembly, heterodimer composed of OSMR and IL6ST (type II OSM receptor). Heterodimer with IL31RA to form the IL31 receptor. As to expression, widely expressed. Expressed at highest levels in the lung, heart, thymus and spleen. Expressed in dorsal root ganglia.

The protein localises to the membrane. Functionally, associates with IL31RA to form the IL31 receptor. Binds IL31 to activate STAT3 and possibly STAT1 and STAT5. Capable of transducing OSM-specific signaling events. This Mus musculus (Mouse) protein is Oncostatin-M-specific receptor subunit beta (Osmr).